We begin with the raw amino-acid sequence, 589 residues long: Intermediate filament protein ifb-1 (589 aa).

Residues 1 to 42 (MSSHKESSEYEMQYRSTIQPRTAVRSQSRQSGNYVSGGNGAG) are disordered. Residues 8–84 (SEYEMQYRST…LEATDKEKKT (77 aa)) are head. Over residues 14-30 (YRSTIQPRTAVRSQSRQ) the composition is skewed to polar residues. The 353-residue stretch at 81–433 (EKKTLQGLND…KMLEGEETRV (353 aa)) folds into the IF rod domain. A coil 1A region spans residues 85–116 (LQGLNDRLGNYIDRVKKLEEQNRKLVADLDEL). Positions 117 to 130 (RGKWGKDTSEIKIK) are linker 1. Positions 131-268 (YSESLSTARK…RVHEQEVKEL (138 aa)) are coil 1B. The tract at residues 269–285 (QALLAQAPADTREFFKN) is linker 12. The segment at 286–433 (ELALAIRDIK…KMLEGEETRV (148 aa)) is coil 2. The interval 434–588 (GLTQMVEQAV…THTQKTIQSG (155 aa)) is tail. The tract at residues 444-470 (KTHSLQQQENTDSTRSVRGEVSTKTTF) is disordered. The LTD domain maps to 466 to 584 (TKTTFQRSAK…EERATHTQKT (119 aa)).

This sequence belongs to the intermediate filament family. As to quaternary structure, forms some heteromeric filaments with ifa-1, ifa-2, ifa-3 and probably ifa-4. Expressed in epidermal cells. Expressed in amphid sensory neurons, the excretory cells, the vulva, the uterus, the rectum and some neurons of the tail. Isoform a and isoform b display a similar pattern of expression. Isoform a is predominant in pharyngeal tonofilaments.

The protein resides in the cytoplasm. Its function is as follows. Cytoplasmic intermediate filaments provide mechanical strength to cells. Essential protein, involved in attachment structures in epidermal cells that connect muscles to the external cuticle. Required in morphogenesis and epidermal integrity. Probable component of embryonic epidermal attachment structures. Functions in larval muscle attachment independently of ifa-2. In Caenorhabditis elegans, this protein is Intermediate filament protein ifb-1 (ifb-1).